A 417-amino-acid chain; its full sequence is Serine hydroxymethyltransferase (417 aa).

Residues L120 and 124–126 (GHL) contribute to the (6S)-5,6,7,8-tetrahydrofolate site. Residue K229 is modified to N6-(pyridoxal phosphate)lysine.

Belongs to the SHMT family. Homodimer. Pyridoxal 5'-phosphate is required as a cofactor.

It localises to the cytoplasm. It catalyses the reaction (6R)-5,10-methylene-5,6,7,8-tetrahydrofolate + glycine + H2O = (6S)-5,6,7,8-tetrahydrofolate + L-serine. It participates in one-carbon metabolism; tetrahydrofolate interconversion. Its pathway is amino-acid biosynthesis; glycine biosynthesis; glycine from L-serine: step 1/1. Its function is as follows. Catalyzes the reversible interconversion of serine and glycine with tetrahydrofolate (THF) serving as the one-carbon carrier. This reaction serves as the major source of one-carbon groups required for the biosynthesis of purines, thymidylate, methionine, and other important biomolecules. Also exhibits THF-independent aldolase activity toward beta-hydroxyamino acids, producing glycine and aldehydes, via a retro-aldol mechanism. This Anaeromyxobacter dehalogenans (strain 2CP-C) protein is Serine hydroxymethyltransferase.